We begin with the raw amino-acid sequence, 308 residues long: tRNA dimethylallyltransferase (308 aa).

11 to 18 (GSTATGKS) serves as a coordination point for ATP. 13–18 (TATGKS) serves as a coordination point for substrate. Positions 36 to 39 (DSVQ) are interaction with substrate tRNA.

Belongs to the IPP transferase family. Monomer. Mg(2+) is required as a cofactor.

The catalysed reaction is adenosine(37) in tRNA + dimethylallyl diphosphate = N(6)-dimethylallyladenosine(37) in tRNA + diphosphate. Functionally, catalyzes the transfer of a dimethylallyl group onto the adenine at position 37 in tRNAs that read codons beginning with uridine, leading to the formation of N6-(dimethylallyl)adenosine (i(6)A). In Bdellovibrio bacteriovorus (strain ATCC 15356 / DSM 50701 / NCIMB 9529 / HD100), this protein is tRNA dimethylallyltransferase.